Consider the following 73-residue polypeptide: UPF0499 protein CHGG_06021 (73 aa).

Residues 1–20 (MKSSIHVVLFFLLSLVASMA) form the signal peptide. Disulfide bonds link C41–C55, C48–C60, and C54–C69.

This sequence belongs to the UPF0499 family.

Its subcellular location is the secreted. This Chaetomium globosum (strain ATCC 6205 / CBS 148.51 / DSM 1962 / NBRC 6347 / NRRL 1970) (Soil fungus) protein is UPF0499 protein CHGG_06021.